Here is a 152-residue protein sequence, read N- to C-terminus: Transcriptional repressor NrdR (152 aa).

Polar residues predominate over residues 1–10 (MKCPSCQHNG). A disordered region spans residues 1 to 21 (MKCPSCQHNGSRVLDSRPADE). The segment at 3-34 (CPSCQHNGSRVLDSRPADEGKSIRRRRECEAC) is a zinc-finger region. The region spanning 49–139 (LIVVKKEGVR…VYRQFKDINV (91 aa)) is the ATP-cone domain.

Belongs to the NrdR family. Zn(2+) is required as a cofactor.

Functionally, negatively regulates transcription of bacterial ribonucleotide reductase nrd genes and operons by binding to NrdR-boxes. The sequence is that of Transcriptional repressor NrdR from Bacillus velezensis (strain DSM 23117 / BGSC 10A6 / LMG 26770 / FZB42) (Bacillus amyloliquefaciens subsp. plantarum).